Here is a 237-residue protein sequence, read N- to C-terminus: Ribose-5-phosphate isomerase A (237 aa).

Residues Thr-32–Thr-35, Asp-85–Asp-88, and Lys-99–Gly-102 contribute to the substrate site. Glu-108 (proton acceptor) is an active-site residue. Position 126 (Arg-126) interacts with substrate.

This sequence belongs to the ribose 5-phosphate isomerase family. In terms of assembly, homodimer.

It catalyses the reaction aldehydo-D-ribose 5-phosphate = D-ribulose 5-phosphate. Its pathway is carbohydrate degradation; pentose phosphate pathway; D-ribose 5-phosphate from D-ribulose 5-phosphate (non-oxidative stage): step 1/1. Functionally, catalyzes the reversible conversion of ribose-5-phosphate to ribulose 5-phosphate. The protein is Ribose-5-phosphate isomerase A of Aeropyrum pernix (strain ATCC 700893 / DSM 11879 / JCM 9820 / NBRC 100138 / K1).